The sequence spans 358 residues: Putative ankyrin repeat protein FPV242 (358 aa).

10 ANK repeats span residues 6-35, 40-69, 91-118, 119-147, 149-177, 180-209, 214-243, 248-277, 280-312, and 316-345; these read NNYR…NMIV, NNHT…NLVY, TRRN…DKGV, ELTG…SVEY, GFFP…DINK, CGET…DIEK, EQDP…SIDT, NHKP…NPFI, EGNT…RLPG, and YYIQ…RITS.

The sequence is that of Putative ankyrin repeat protein FPV242 from Fowlpox virus (strain NVSL) (FPV).